Here is a 155-residue protein sequence, read N- to C-terminus: Isotocin-neurophysin IT 1 (155 aa).

Residues 1-19 (MTGTAISVCLLFLLSVCSA) form the signal peptide. Cysteines 20 and 25 form a disulfide. A Glycine amide modification is found at Gly-28. 7 disulfide bridges follow: Cys-41–Cys-85, Cys-44–Cys-58, Cys-52–Cys-75, Cys-59–Cys-65, Cys-92–Cys-105, Cys-99–Cys-117, and Cys-106–Cys-111.

This sequence belongs to the vasopressin/oxytocin family. Post-translationally, seven disulfide bonds are present in neurophysin.

Functionally, isotocin causes contraction of smooth muscles. This Takifugu rubripes (Japanese pufferfish) protein is Isotocin-neurophysin IT 1.